The chain runs to 240 residues: Ribosomal RNA large subunit methyltransferase E (240 aa).

The span at 1 to 13 (MAKKPGSQNTSGR) shows a compositional bias: polar residues. Residues 1–20 (MAKKPGSQNTSGRGQRDLKV) are disordered. S-adenosyl-L-methionine-binding residues include Gly85, Trp87, Asp113, Asp129, and Asp153. Lys193 (proton acceptor) is an active-site residue.

It belongs to the class I-like SAM-binding methyltransferase superfamily. RNA methyltransferase RlmE family.

The protein localises to the cytoplasm. It carries out the reaction uridine(2552) in 23S rRNA + S-adenosyl-L-methionine = 2'-O-methyluridine(2552) in 23S rRNA + S-adenosyl-L-homocysteine + H(+). Functionally, specifically methylates the uridine in position 2552 of 23S rRNA at the 2'-O position of the ribose in the fully assembled 50S ribosomal subunit. In Roseobacter denitrificans (strain ATCC 33942 / OCh 114) (Erythrobacter sp. (strain OCh 114)), this protein is Ribosomal RNA large subunit methyltransferase E.